The following is a 378-amino-acid chain: MLKKLKDYRRIVVKIGSALLVDRATGLKRKWLESLGQDIAALQHAGVEVLVVSSGAIALGRTVLGLPKKALKLEESQAAAAAGQIALAKAYADVLGGHGIKSGQILVTLSDTEERRRYLNARATIETLLKLKAVPIINENDTVATTEIRYGDNDRLAARVATMMGADLLILLSDIDGLYTAPPHKNPDAQFLPFVETITPQIEAMAGAAASELSRGGMKTKLDAGKIANAAGTAMIITSGTRFGPLSAIDRGERATLFEAAHAPVNAWKTWISGNLEPAGRLTVDAGAVKALKSGKSLLPAGVKEVDGDFERGDTVAVMNEDGREIARGLIAYDAADARKVAGHKSDEISAILGYDARAAMIHRNDLVVRAASDAKAA.

Lys-14 contacts ATP. Residues Ser-54, Asp-141, and Asn-153 each coordinate substrate. Position 173 to 174 (173 to 174 (SD)) interacts with ATP. The PUA domain maps to 279-356 (AGRLTVDAGA…DEISAILGYD (78 aa)).

Belongs to the glutamate 5-kinase family.

It is found in the cytoplasm. It carries out the reaction L-glutamate + ATP = L-glutamyl 5-phosphate + ADP. Its pathway is amino-acid biosynthesis; L-proline biosynthesis; L-glutamate 5-semialdehyde from L-glutamate: step 1/2. In terms of biological role, catalyzes the transfer of a phosphate group to glutamate to form L-glutamate 5-phosphate. This is Glutamate 5-kinase from Brucella abortus (strain S19).